The following is a 250-amino-acid chain: Cell division protein ZapD (250 aa).

Belongs to the ZapD family. In terms of assembly, interacts with FtsZ.

It is found in the cytoplasm. In terms of biological role, cell division factor that enhances FtsZ-ring assembly. Directly interacts with FtsZ and promotes bundling of FtsZ protofilaments, with a reduction in FtsZ GTPase activity. This is Cell division protein ZapD from Yersinia pseudotuberculosis serotype O:1b (strain IP 31758).